We begin with the raw amino-acid sequence, 145 residues long: Aspartate 1-decarboxylase (145 aa).

Residue Ser-25 is the Schiff-base intermediate with substrate; via pyruvic acid of the active site. At Ser-25 the chain carries Pyruvic acid (Ser). Residue Thr-57 participates in substrate binding. Residue Tyr-58 is the Proton donor of the active site. Residue 73 to 75 (GAA) participates in substrate binding.

This sequence belongs to the PanD family. In terms of assembly, heterooctamer of four alpha and four beta subunits. The cofactor is pyruvate. In terms of processing, is synthesized initially as an inactive proenzyme, which is activated by self-cleavage at a specific serine bond to produce a beta-subunit with a hydroxyl group at its C-terminus and an alpha-subunit with a pyruvoyl group at its N-terminus.

It localises to the cytoplasm. It catalyses the reaction L-aspartate + H(+) = beta-alanine + CO2. It functions in the pathway cofactor biosynthesis; (R)-pantothenate biosynthesis; beta-alanine from L-aspartate: step 1/1. In terms of biological role, catalyzes the pyruvoyl-dependent decarboxylation of aspartate to produce beta-alanine. The chain is Aspartate 1-decarboxylase from Micrococcus luteus (strain ATCC 4698 / DSM 20030 / JCM 1464 / CCM 169 / CCUG 5858 / IAM 1056 / NBRC 3333 / NCIMB 9278 / NCTC 2665 / VKM Ac-2230) (Micrococcus lysodeikticus).